Reading from the N-terminus, the 112-residue chain is Prothymosin alpha (112 aa).

Residue Met1 is modified to N-acetylmethionine. Positions 1 to 112 (MSDAAVDTSS…KKQKKTDEDD (112 aa)) are disordered. At Ser2 the chain carries N-acetylserine; in Prothymosin alpha, N-terminally processed. Ser2 carries the phosphoserine modification. Position 8 is a phosphothreonine (Thr8). Phosphoserine occurs at positions 9 and 10. Thr13 and Thr14 each carry phosphothreonine. Over residues 13 to 31 (TTKDLKEKKEVVEEAENGR) the composition is skewed to basic and acidic residues. An N6-acetyllysine; alternate modification is found at Lys15. The residue at position 15 (Lys15) is an N6-succinyllysine; alternate. A compositionally biased stretch (acidic residues) spans 43–84 (ENGEQEADNEVDEEEEEGGEEEEEEEEGDGEEEDGDEDEEAE). Basic and acidic residues predominate over residues 101–112 (ETKKQKKTDEDD). Residue Thr102 is modified to Phosphothreonine. N6-acetyllysine; alternate is present on Lys103. Lys103 participates in a covalent cross-link: Glycyl lysine isopeptide (Lys-Gly) (interchain with G-Cter in SUMO2); alternate. Residue Thr108 is modified to Phosphothreonine.

It belongs to the pro/parathymosin family. As to quaternary structure, interacts with NUPR1; regulates apoptotic process. In terms of processing, covalently linked to a small RNA of about 20 nucleotides.

The protein localises to the nucleus. In terms of biological role, prothymosin alpha may mediate immune function by conferring resistance to certain opportunistic infections. This Rattus norvegicus (Rat) protein is Prothymosin alpha (Ptma).